A 435-amino-acid polypeptide reads, in one-letter code: 3-ketoacyl-CoA thiolase (435 aa).

Cysteine 98 (acyl-thioester intermediate) is an active-site residue. Catalysis depends on proton acceptor residues histidine 391 and cysteine 421.

The protein belongs to the thiolase-like superfamily. Thiolase family. As to quaternary structure, heterotetramer of two alpha chains (FadJ) and two beta chains (FadI).

Its subcellular location is the cytoplasm. It catalyses the reaction an acyl-CoA + acetyl-CoA = a 3-oxoacyl-CoA + CoA. It functions in the pathway lipid metabolism; fatty acid beta-oxidation. Catalyzes the final step of fatty acid oxidation in which acetyl-CoA is released and the CoA ester of a fatty acid two carbons shorter is formed. This is 3-ketoacyl-CoA thiolase from Colwellia psychrerythraea (strain 34H / ATCC BAA-681) (Vibrio psychroerythus).